Reading from the N-terminus, the 295-residue chain is MTSTEWRTGLTGAQQAEIRALIDAATTHDGVAPVGDQVLRELGRDRTRHLLTTDDDRVVGYLNLAPAEGDDPAMAELVVHPQARRRGIGAAMARTALAEGGPGARIWAHGNIAAAQAMASSLRLVVVRELLQMRRPLTDLPPVPDTPGVRIATYAGPGDDAEILRVNNAAFSWHPEQGGWTEHEIDERRNEGWFDPEGLFQAFDEQTGSLLGFHWTKIHDASLGEVYVVGVDPQAQGRGLGYTLTLIGLHHLAEKLAGPEPTVLLYVEADNSAAVNTYRKLGFEVFSVDAAYAAN.

2 consecutive N-acetyltransferase domains span residues 4-138 (TEWR…RPLT) and 149-295 (VRIA…YAAN). Asp-36 serves as a coordination point for 1D-myo-inositol 2-(L-cysteinylamino)-2-deoxy-alpha-D-glucopyranoside. Acetyl-CoA-binding positions include 77–79 (LVV) and 85–90 (RRGIGA). Glu-176, Lys-217, and Glu-225 together coordinate 1D-myo-inositol 2-(L-cysteinylamino)-2-deoxy-alpha-D-glucopyranoside. Residues 229 to 231 (VGV) and 236 to 242 (QGRGLGY) each bind acetyl-CoA. Position 266 (Tyr-266) interacts with 1D-myo-inositol 2-(L-cysteinylamino)-2-deoxy-alpha-D-glucopyranoside. 271–276 (NSAAVN) provides a ligand contact to acetyl-CoA.

It belongs to the acetyltransferase family. MshD subfamily. As to quaternary structure, monomer.

It carries out the reaction 1D-myo-inositol 2-(L-cysteinylamino)-2-deoxy-alpha-D-glucopyranoside + acetyl-CoA = mycothiol + CoA + H(+). Functionally, catalyzes the transfer of acetyl from acetyl-CoA to desacetylmycothiol (Cys-GlcN-Ins) to form mycothiol. The polypeptide is Mycothiol acetyltransferase (mshD) (Mycolicibacterium smegmatis (strain ATCC 700084 / mc(2)155) (Mycobacterium smegmatis)).